Here is a 187-residue protein sequence, read N- to C-terminus: MPTGGFDINELKRRMQGATQSLKHELGGLRTGRAAASMLEPVQVEAYGSHMPLNQLATVSVPEPRLLSVQVWDRSMVKAVEKAIVDSNLGLSPATEGQVLRLRIPELNEERRKELVKVAHKYAEATRVAVRHVRRDGLDTLKKLEKNSEISEDDQERLAHEVQKATDATILEVDQLLAAKEKEILTV.

This sequence belongs to the RRF family.

Its subcellular location is the cytoplasm. In terms of biological role, responsible for the release of ribosomes from messenger RNA at the termination of protein biosynthesis. May increase the efficiency of translation by recycling ribosomes from one round of translation to another. This Rhodopseudomonas palustris (strain BisB18) protein is Ribosome-recycling factor.